The following is a 396-amino-acid chain: Elongation factor Tu (396 aa).

One can recognise a tr-type G domain in the interval 10-205; the sequence is KSHANIGTIG…AVDEYIPTPE (196 aa). Residues 19–26 are G1; it reads GHVDHGKT. GTP is bound at residue 19 to 26; it reads GHVDHGKT. Thr26 is a binding site for Mg(2+). Residues 61 to 65 form a G2 region; it reads GITIS. The G3 stretch occupies residues 82–85; that stretch reads DCPG. GTP contacts are provided by residues 82–86 and 137–140; these read DCPGH and NKCD. The G4 stretch occupies residues 137 to 140; the sequence is NKCD. The tract at residues 175-177 is G5; that stretch reads SAL.

It belongs to the TRAFAC class translation factor GTPase superfamily. Classic translation factor GTPase family. EF-Tu/EF-1A subfamily. As to quaternary structure, monomer.

Its subcellular location is the cytoplasm. It carries out the reaction GTP + H2O = GDP + phosphate + H(+). GTP hydrolase that promotes the GTP-dependent binding of aminoacyl-tRNA to the A-site of ribosomes during protein biosynthesis. This chain is Elongation factor Tu, found in Bacillus velezensis (strain DSM 23117 / BGSC 10A6 / LMG 26770 / FZB42) (Bacillus amyloliquefaciens subsp. plantarum).